A 125-amino-acid polypeptide reads, in one-letter code: Membrane protein BRI3 (125 aa).

Transmembrane regions (helical) follow at residues 67 to 86 (YPAN…VGVL) and 92 to 112 (FLGI…CFAL).

It belongs to the BRI3 family. In terms of assembly, interacts with BRI3BP. Interacts with MGAT1 and IFITM3. Interacts with BRI3BP, MGAT1 and IFITM3; the interactions are weaker than with isoform 1.

Its subcellular location is the lysosome membrane. The protein resides in the cytoplasm. The protein localises to the perinuclear region. It localises to the nucleus. Its function is as follows. Participates in tumor necrosis factor-alpha (TNF)-induced cell death. May be a target of Wnt/beta-catenin signaling in the liver. The polypeptide is Membrane protein BRI3 (BRI3) (Homo sapiens (Human)).